We begin with the raw amino-acid sequence, 684 residues long: Protein EXECUTER 1, chloroplastic (684 aa).

A compositionally biased stretch (polar residues) spans 1–31 (MPSLSTPPSQNLAFSPAASATSSRLTPSSKR). Residues 1 to 46 (MPSLSTPPSQNLAFSPAASATSSRLTPSSKRSFYPHRLPDPTALCR) constitute a chloroplast transit peptide. The interval 1 to 66 (MPSLSTPPSQ…SSSSSDDNPR (66 aa)) is disordered. The segment covering 48–61 (SSSSGSNSSSSSSS) has biased composition (low complexity). In terms of domain architecture, UVR spans 127 to 162 (DRLLSVLKSQLNRAIKREDYEDAARLKVAIAATATN). The disordered stretch occupies residues 278 to 318 (TLTPGRFLTSPGRKEDTGNLAVESSEDEESDNSDDDSDLLE). The span at 301–318 (SSEDEESDNSDDDSDLLE) shows a compositional bias: acidic residues.

The protein localises to the plastid. It localises to the chloroplast. Together with EX2, enables higher plants to perceive singlet oxygen as a stress signal in plastid that activates a genetically determined nuclear stress response program which triggers a programmed cell death (PCD). This transfer of singlet oxygen-induced stress-related signals from the plastid to the nucleus that triggers genetically controlled PCD pathway is unique to photosynthetic eukaryotes and operates under mild stress conditions, impeding photosystem II (PSII) without causing photooxidative damage of the plant. This chain is Protein EXECUTER 1, chloroplastic, found in Arabidopsis thaliana (Mouse-ear cress).